We begin with the raw amino-acid sequence, 142 residues long: Thioredoxin-like protein 4A (142 aa).

The cysteines at positions 38 and 79 are disulfide-linked. Ser-132 carries the phosphoserine modification.

It belongs to the DIM1 family. In terms of assembly, component of the precatalytic spliceosome (spliceosome B complex). Component of the U5 snRNP complex. Component of the U4/U6-U5 tri-snRNP complex. The U4/U6-U5 tri-snRNP complex is a building block of the precatalytic spliceosome (spliceosome B complex). The U4/U6-U5 tri-snRNP complex is composed of the U4, U6 and U5 snRNAs and at least PRPF3, PRPF4, PRPF6, PRPF8, PRPF31, SNRNP200, TXNL4A, SNRNP40, SNRPB, SNRPD1, SNRPD2, SNRPD3, SNRPE, SNRPF, SNRPG, DDX23, CD2BP2, PPIH, SNU13, EFTUD2, SART1 and USP39, plus LSM2, LSM3, LSM4, LSM5, LSM6, LSM7 and LSM8. Directly interacts with CD2BP2. Interacts with HNRPF, HNRPH2, NEDD9 and PQBP1. Interacts with ERBB4. The disulfide bond seen in structures determined by X-ray crystallography and NMR is not essential for protein folding and function.

It is found in the nucleus. Plays a role in pre-mRNA splicing as component of the U5 snRNP and U4/U6-U5 tri-snRNP complexes that are involved in spliceosome assembly, and as component of the precatalytic spliceosome (spliceosome B complex). This chain is Thioredoxin-like protein 4A (TXNL4A), found in Homo sapiens (Human).